The chain runs to 648 residues: Acyl-CoA-binding domain-containing protein 5 (648 aa).

The region spanning 13–107 (YPERFYAAAS…LEEADPGWYP (95 aa)) is the ACB domain. An acyl-CoA contacts are provided by residues K34, 49 to 53 (YTLHQ), and K75. 6 Kelch repeats span residues 196–244 (KMYM…KLTH), 256–306 (QLLS…LVGK), 307–357 (SLVI…VHAE), 359–408 (YLLI…TIGE), 409–457 (NWYI…LVVS), and 464–509 (IVVA…AVNN). S517 carries the phosphoserine modification. The stretch at 520–632 (KVEGKADRII…AATMNAKRQS (113 aa)) forms a coiled coil. Polar residues predominate over residues 625–634 (TMNAKRQSSG). Residues 625 to 648 (TMNAKRQSSGGVWGWLAGTPPPKT) form a disordered region.

This sequence belongs to the ACBP family. As to expression, expressed in roots, stems, leaves, flowers and siliques.

It is found in the cytoplasm. Binds medium- and long-chain acyl-CoA esters with very high affinity. Can interact in vitro with oleoyl-CoA, barely with palmitoyl-CoA, but not with arachidonyl-CoA. May function as an intracellular carrier of acyl-CoA esters. The protein is Acyl-CoA-binding domain-containing protein 5 (ACBP5) of Arabidopsis thaliana (Mouse-ear cress).